The following is a 267-amino-acid chain: Undecaprenyl-diphosphatase (267 aa).

8 helical membrane passes run 1-21 (MSYF…FLPI), 39-59 (QGLA…VIYF), 83-103 (AKLA…GLLM), 111-131 (LRSA…LWWV), 144-164 (TGWK…IPGT), 189-209 (FLMS…KLVT), 218-238 (FLLT…HFFL), and 245-265 (GMTP…AFLL).

The protein belongs to the UppP family.

The protein resides in the cell inner membrane. It catalyses the reaction di-trans,octa-cis-undecaprenyl diphosphate + H2O = di-trans,octa-cis-undecaprenyl phosphate + phosphate + H(+). Catalyzes the dephosphorylation of undecaprenyl diphosphate (UPP). Confers resistance to bacitracin. This chain is Undecaprenyl-diphosphatase, found in Vibrio parahaemolyticus serotype O3:K6 (strain RIMD 2210633).